Consider the following 122-residue polypeptide: UPF0102 protein Krad_1407 (122 aa).

The protein belongs to the UPF0102 family.

In Kineococcus radiotolerans (strain ATCC BAA-149 / DSM 14245 / SRS30216), this protein is UPF0102 protein Krad_1407.